The following is a 91-amino-acid chain: Large ribosomal subunit protein uL23c (91 aa).

Belongs to the universal ribosomal protein uL23 family. As to quaternary structure, part of the 50S ribosomal subunit.

It localises to the plastid. It is found in the chloroplast. Binds to 23S rRNA. This is Large ribosomal subunit protein uL23c (rpl23) from Pinus thunbergii (Japanese black pine).